The chain runs to 180 residues: Ribosome maturation factor RimM (180 aa).

Residues 108-180 enclose the PRC barrel domain; it reads PDEYYWVDLE…LIVVDWDPDF (73 aa).

Belongs to the RimM family. As to quaternary structure, binds ribosomal protein uS19.

Its subcellular location is the cytoplasm. Functionally, an accessory protein needed during the final step in the assembly of 30S ribosomal subunit, possibly for assembly of the head region. Essential for efficient processing of 16S rRNA. May be needed both before and after RbfA during the maturation of 16S rRNA. It has affinity for free ribosomal 30S subunits but not for 70S ribosomes. This is Ribosome maturation factor RimM from Xanthomonas euvesicatoria pv. vesicatoria (strain 85-10) (Xanthomonas campestris pv. vesicatoria).